A 149-amino-acid chain; its full sequence is Large ribosomal subunit protein uL15 (149 aa).

The disordered stretch occupies residues His8 to Ala49. The segment covering Gly31–Lys45 has biased composition (low complexity).

Belongs to the universal ribosomal protein uL15 family. As to quaternary structure, part of the 50S ribosomal subunit.

In terms of biological role, binds to the 23S rRNA. This is Large ribosomal subunit protein uL15 from Corynebacterium aurimucosum (strain ATCC 700975 / DSM 44827 / CIP 107346 / CN-1) (Corynebacterium nigricans).